The sequence spans 405 residues: Enoyl-[acyl-carrier-protein] reductase [NADH] (405 aa).

Residues 51–56, 77–78, 114–115, and 142–143 each bind NAD(+); these read GASSGY, FE, DA, and LA. Residue Tyr228 coordinates substrate. Tyr238 (proton donor) is an active-site residue. NAD(+) contacts are provided by residues Lys247 and 276–278; that span reads VVT.

This sequence belongs to the TER reductase family. In terms of assembly, monomer.

It catalyses the reaction a 2,3-saturated acyl-[ACP] + NAD(+) = a (2E)-enoyl-[ACP] + NADH + H(+). The protein operates within lipid metabolism; fatty acid biosynthesis. Functionally, involved in the final reduction of the elongation cycle of fatty acid synthesis (FAS II). Catalyzes the reduction of a carbon-carbon double bond in an enoyl moiety that is covalently linked to an acyl carrier protein (ACP). The polypeptide is Enoyl-[acyl-carrier-protein] reductase [NADH] (Chromohalobacter salexigens (strain ATCC BAA-138 / DSM 3043 / CIP 106854 / NCIMB 13768 / 1H11)).